A 477-amino-acid chain; its full sequence is Calcium/calmodulin-dependent protein kinase type 1G (477 aa).

Positions 23–277 (FIFMEVLGSG…CEKALRHPWI (255 aa)) constitute a Protein kinase domain. ATP is bound by residues 29 to 37 (LGSGAFSEV) and lysine 52. Residue aspartate 143 is the Proton acceptor of the active site. An autoinhibitory domain region spans residues 277–317 (IDGNTALHRDIYPSVSLQIQKNFAKSKWRQAFNAAAVVHHM). The segment at 297–318 (KNFAKSKWRQAFNAAAVVHHMR) is calmodulin-binding. The disordered stretch occupies residues 326-388 (SPSVRQEVEN…SRPSAPSGGR (63 aa)). The span at 376–388 (SHSSRPSAPSGGR) shows a compositional bias: low complexity.

This sequence belongs to the protein kinase superfamily. CAMK Ser/Thr protein kinase family. CaMK subfamily. In terms of processing, may be prenylated on Cys-474. Highly expressed in brain, in neuronal cell bodies of the central nucleus of amygdala and ventromedial hypothalamic nucleus. Also detected in heart, testis, and kidney.

It is found in the cytoplasm. The protein resides in the golgi apparatus membrane. Its subcellular location is the cell membrane. The enzyme catalyses L-seryl-[protein] + ATP = O-phospho-L-seryl-[protein] + ADP + H(+). The catalysed reaction is L-threonyl-[protein] + ATP = O-phospho-L-threonyl-[protein] + ADP + H(+). Activated by Ca(2+)/calmodulin. Binding of calmodulin is thought to result in a conformational change and leads to activation through phosphorylation by CAMKK1. Its function is as follows. Calcium/calmodulin-dependent protein kinase belonging to a proposed calcium-triggered signaling cascade. In vitro phosphorylates transcription factor CREB1. The sequence is that of Calcium/calmodulin-dependent protein kinase type 1G (Camk1g) from Mus musculus (Mouse).